The chain runs to 853 residues: Deubiquitinase otu (853 aa).

Positions 1-20 (MDMQVQRPITSGSRQAPDPY) are disordered. Residues 29–150 (LYRKHTARDA…ENHFDSVYDV (122 aa)) form the OTU domain. Asp37 is an active-site residue. The Nucleophile role is filled by Ser40. The active site involves His143. The region spanning 336-396 (NFKVGAKCKV…HPLPPDEYRP (61 aa)) is the Tudor domain. Residues 396–853 (PWSLPFRYHR…AAVYAATRHH (458 aa)) are LC domain. The segment covering 460-470 (QDDEQRDHNDP) has biased composition (basic and acidic residues). 4 disordered regions span residues 460–531 (QDDE…YVPM), 681–704 (AVES…LEKS), 732–794 (GPAA…AAQG), and 817–853 (NMDP…TRHH). Residues 499 to 517 (SRVQPQNSSSSQNQEVSGS) are compositionally biased toward low complexity. A compositionally biased stretch (polar residues) spans 747–758 (NGSQFSFYTTPS). A compositionally biased stretch (pro residues) spans 769–778 (LLQPPPPPPI). 2 stretches are compositionally biased toward low complexity: residues 783–794 (AGPPQLGGAAQG) and 820–838 (PSAQ…APLS).

In terms of assembly, self aggregates, forming amyloid-like fibrillar helical structures; protein aggregation is mediated by the C-terminal LC domain, is enhanced by RNA binding and is essential for deubiquitinase activity. Interacts (via OTU domain) with bam (via C-terminus); the interaction enhances otu aggregation and deubiquitinase activity. Together with bam interacts with CycA/cyclin-A; the interaction stabilizes CycA by promoting its deubiquitination. Together with bam interacts with Traf6. Interacts with Hrb27C; the interaction is RNA-independent. Associates (via N-terminus) with mRNP complexes; the interaction is weak. In terms of tissue distribution, expressed at high levels in the ovary, at low levels in the brain and fat body, and at moderate levels in the gut.

The protein resides in the cytoplasm. It is found in the cell cortex. It localises to the perinuclear region. With respect to regulation, activated by protein aggregation, which is mediated by the LC domain and enhanced by RNA binding. Functionally, catalytic component of a deubiquitinase complex consisting of bam and otu. The complex deubiquitinates K63-linked polyubiquitinated proteins; this antagonizes the ubiquitination activity of Traf6 and regulates the IMD immune signaling pathway. Otu-bam deubiquitinase activity is regulated by Traf6 dependent immune signaling regulation of bam expression levels; this forms a feedback loop that regulates the IMD immune signaling pathway and balances gut immune activity during aging. The complex deubiquitinates and stabilizes CycA/cyclin-A to regulate CycA-dependent differentiation. Involved in grk mRNA localization to the dorsal anterior region of the oocyte required for dorsal-ventral axis determination; may function as a ribonuclear protein complex together with sqd and Hrb27C. May regulate actin cytoskeleton organization in differentiating cystocytes during fusome maturation; required for efficient nurse cell cytoplasmic dumping during oogenesis. Essential for female fertility; involved in germ cell proliferation and germ cell differentiation. Its function is as follows. Involved in the early stages of germ cell proliferation and differentiation during oogenesis. Required for polytene chromosome dispersal in nurse cells during oogenesis. In terms of biological role, involved in the later stages of germ cell proliferation and differentiation during oogenesis. This Drosophila melanogaster (Fruit fly) protein is Deubiquitinase otu.